Reading from the N-terminus, the 430-residue chain is Nacrein-like protein P2 (430 aa).

N27 carries an N-linked (GlcNAc...) asparagine glycan. The Alpha-carbonic anhydrase domain occupies 33–429 (AGFSYDRSIC…KNKVTVYKSF (397 aa)). The Zn(2+) site is built by H132, H134, and H157. The tract at residues 201–312 (DEPDDEECKR…GENGHKHGCR (112 aa)) is disordered. Basic and acidic residues predominate over residues 207–219 (ECKRILKGHHPDN). The span at 220 to 304 (NENGNGDNGN…NNGENGNNGE (85 aa)) shows a compositional bias: low complexity. A run of 27 repeats spans residues 225-227 (GDN), 228-230 (GNN), 231-233 (GYN), 234-236 (GDN), 237-239 (GNN), 240-242 (GDN), 243-245 (GNN), 246-248 (GYN), 249-251 (GDN), 252-254 (GNN), 255-257 (GVN), 258-260 (GNN), 261-263 (GYN), 264-266 (GDN), 267-269 (GNN), 270-272 (GDN), 273-275 (GNN), 276-278 (GYN), 279-281 (GDN), 282-284 (GNN), 285-287 (GDN), 288-290 (GNN), 291-293 (GEN), 294-296 (GNN), 297-299 (GEN), 300-301 (GN), and 303-305 (GEN). Residues 225–305 (GDNGNNGYNG…NGENGNNGEN (81 aa)) are 27 X 3 AA approximate tandem repeats of G-X-N. 370–371 (TT) is a binding site for substrate.

It belongs to the alpha-carbonic anhydrase family. As to quaternary structure, homooligomer; disulfide-linked. May also be disulfide-linked to insoluble organic matrix. The cofactor is Zn(2+). As to expression, expressed in the mantle.

The protein resides in the secreted. It is found in the extracellular space. Its subcellular location is the extracellular matrix. It catalyses the reaction hydrogencarbonate + H(+) = CO2 + H2O. In terms of biological role, acts as a negative regulator for calcification in the shells of mollusks. May function both as a calcium concentrator and as a carbonic anhydrase required for production of carbonate ions, which are assembled to CaCO(3) at mineralization sites. Is important for shell formation in both the calcitic prismatic layer and the aragonitic nacreous layer. Shows inhibitory activity of crystal formation when present in free state but, when attached to the insoluble matrix, may regulate the form and size of aragonite crystal. The polypeptide is Nacrein-like protein P2 (Mizuhopecten yessoensis (Japanese scallop)).